Reading from the N-terminus, the 121-residue chain is Large ribosomal subunit protein bL19 (121 aa).

It belongs to the bacterial ribosomal protein bL19 family.

In terms of biological role, this protein is located at the 30S-50S ribosomal subunit interface and may play a role in the structure and function of the aminoacyl-tRNA binding site. The polypeptide is Large ribosomal subunit protein bL19 (Polaromonas sp. (strain JS666 / ATCC BAA-500)).